We begin with the raw amino-acid sequence, 243 residues long: CTD nuclear envelope phosphatase 1 homolog (243 aa).

The helical transmembrane segment at 11-27 (ALLLLLSKVWTCICFMF) threads the bilayer. The 168-residue stretch at 56-223 (SLVQRKTLVL…LSLLPMLDAL (168 aa)) folds into the FCP1 homology domain.

It belongs to the dullard family.

It localises to the membrane. The enzyme catalyses O-phospho-L-seryl-[protein] + H2O = L-seryl-[protein] + phosphate. It carries out the reaction O-phospho-L-threonyl-[protein] + H2O = L-threonyl-[protein] + phosphate. Functionally, serine/threonine protein phosphatase that may dephosphorylate and activate lipin-like phosphatases. Lipins are phosphatidate phosphatases that catalyze the conversion of phosphatidic acid to diacylglycerol and control the metabolism of fatty acids at different levels. May indirectly modulate the lipid composition of nuclear and/or endoplasmic reticulum membranes and be required for proper nuclear membrane morphology and/or dynamics. May also indirectly regulate the production of lipid droplets and triacylglycerol. The chain is CTD nuclear envelope phosphatase 1 homolog (l(1)G0269) from Drosophila pseudoobscura pseudoobscura (Fruit fly).